We begin with the raw amino-acid sequence, 298 residues long: N-acetylmuramic acid 6-phosphate etherase 2 (298 aa).

In terms of domain architecture, SIS spans 51-214; that stretch reads IVSRFEQGGR…STAAMVRLGR (164 aa). Catalysis depends on E79, which acts as the Proton donor. E110 is an active-site residue.

The protein belongs to the GCKR-like family. MurNAc-6-P etherase subfamily. As to quaternary structure, homodimer.

The catalysed reaction is N-acetyl-D-muramate 6-phosphate + H2O = N-acetyl-D-glucosamine 6-phosphate + (R)-lactate. It participates in amino-sugar metabolism; N-acetylmuramate degradation. Its function is as follows. Specifically catalyzes the cleavage of the D-lactyl ether substituent of MurNAc 6-phosphate, producing GlcNAc 6-phosphate and D-lactate. This Bacillus licheniformis (strain ATCC 14580 / DSM 13 / JCM 2505 / CCUG 7422 / NBRC 12200 / NCIMB 9375 / NCTC 10341 / NRRL NRS-1264 / Gibson 46) protein is N-acetylmuramic acid 6-phosphate etherase 2.